The chain runs to 558 residues: 2-isopropylmalate synthase (558 aa).

A Pyruvate carboxyltransferase domain is found at 30–303 (PIWCSVDLRD…DPKLDFSNIP (274 aa)). Positions 39, 242, 244, and 278 each coordinate Mg(2+). Residues 438–558 (LNNTLCVQDF…GLVSALNRII (121 aa)) are regulatory domain.

Belongs to the alpha-IPM synthase/homocitrate synthase family. LeuA type 2 subfamily. In terms of assembly, homodimer. Mg(2+) is required as a cofactor.

Its subcellular location is the cytoplasm. It catalyses the reaction 3-methyl-2-oxobutanoate + acetyl-CoA + H2O = (2S)-2-isopropylmalate + CoA + H(+). Its pathway is amino-acid biosynthesis; L-leucine biosynthesis; L-leucine from 3-methyl-2-oxobutanoate: step 1/4. In terms of biological role, catalyzes the condensation of the acetyl group of acetyl-CoA with 3-methyl-2-oxobutanoate (2-ketoisovalerate) to form 3-carboxy-3-hydroxy-4-methylpentanoate (2-isopropylmalate). This chain is 2-isopropylmalate synthase, found in Helicobacter hepaticus (strain ATCC 51449 / 3B1).